Here is a 278-residue protein sequence, read N- to C-terminus: Urease accessory protein UreD (278 aa).

It belongs to the UreD family. In terms of assembly, ureD, UreF and UreG form a complex that acts as a GTP-hydrolysis-dependent molecular chaperone, activating the urease apoprotein by helping to assemble the nickel containing metallocenter of UreC. The UreE protein probably delivers the nickel.

The protein localises to the cytoplasm. In terms of biological role, required for maturation of urease via the functional incorporation of the urease nickel metallocenter. The chain is Urease accessory protein UreD from Leptothrix cholodnii (strain ATCC 51168 / LMG 8142 / SP-6) (Leptothrix discophora (strain SP-6)).